Here is a 64-residue protein sequence, read N- to C-terminus: Large ribosomal subunit protein bL35 (64 aa).

This sequence belongs to the bacterial ribosomal protein bL35 family.

The chain is Large ribosomal subunit protein bL35 from Micrococcus luteus (strain ATCC 4698 / DSM 20030 / JCM 1464 / CCM 169 / CCUG 5858 / IAM 1056 / NBRC 3333 / NCIMB 9278 / NCTC 2665 / VKM Ac-2230) (Micrococcus lysodeikticus).